A 380-amino-acid chain; its full sequence is 1-deoxy-D-xylulose 5-phosphate reductoisomerase (380 aa).

NADPH contacts are provided by T10, G11, S12, I13, G36, R37, N38, and N120. K121 lines the 1-deoxy-D-xylulose 5-phosphate pocket. E122 is an NADPH binding site. D146 provides a ligand contact to Mn(2+). S147, E148, S172, and H195 together coordinate 1-deoxy-D-xylulose 5-phosphate. E148 is a Mn(2+) binding site. G201 contacts NADPH. Positions 208, 213, 214, and 217 each coordinate 1-deoxy-D-xylulose 5-phosphate. E217 provides a ligand contact to Mn(2+).

Belongs to the DXR family. Requires Mg(2+) as cofactor. Mn(2+) serves as cofactor.

It catalyses the reaction 2-C-methyl-D-erythritol 4-phosphate + NADP(+) = 1-deoxy-D-xylulose 5-phosphate + NADPH + H(+). Its pathway is isoprenoid biosynthesis; isopentenyl diphosphate biosynthesis via DXP pathway; isopentenyl diphosphate from 1-deoxy-D-xylulose 5-phosphate: step 1/6. In terms of biological role, catalyzes the NADPH-dependent rearrangement and reduction of 1-deoxy-D-xylulose-5-phosphate (DXP) to 2-C-methyl-D-erythritol 4-phosphate (MEP). The sequence is that of 1-deoxy-D-xylulose 5-phosphate reductoisomerase from Listeria monocytogenes serotype 4a (strain HCC23).